The chain runs to 232 residues: Adenosylcobinamide-GDP ribazoletransferase (232 aa).

The next 6 membrane-spanning stretches (helical) occupy residues 31–51 (LPSFFPLVGYIVGSIYYLGAL), 59–79 (VFFLVLAFYFFDLFHFDGFLD), 102–122 (VGPFAVFFGTLFVVVFWNLYL), 126–146 (PFYFFISSTFGRYSMVLLMAF), 167–187 (LLISTIFTFFLIIFFKQYIIS), and 209–229 (VTGDVLGGTCLFVNGLILLIL).

It belongs to the CobS family. The cofactor is Mg(2+).

The protein resides in the cell inner membrane. It catalyses the reaction alpha-ribazole + adenosylcob(III)inamide-GDP = adenosylcob(III)alamin + GMP + H(+). The catalysed reaction is alpha-ribazole 5'-phosphate + adenosylcob(III)inamide-GDP = adenosylcob(III)alamin 5'-phosphate + GMP + H(+). It participates in cofactor biosynthesis; adenosylcobalamin biosynthesis; adenosylcobalamin from cob(II)yrinate a,c-diamide: step 7/7. Functionally, joins adenosylcobinamide-GDP and alpha-ribazole to generate adenosylcobalamin (Ado-cobalamin). Also synthesizes adenosylcobalamin 5'-phosphate from adenosylcobinamide-GDP and alpha-ribazole 5'-phosphate. In Thermosipho africanus (strain TCF52B), this protein is Adenosylcobinamide-GDP ribazoletransferase.